A 450-amino-acid polypeptide reads, in one-letter code: Transcription factor AP-2 gamma (450 aa).

Lys-10 participates in a covalent cross-link: Glycyl lysine isopeptide (Lys-Gly) (interchain with G-Cter in SUMO). 2 disordered regions span residues 13 to 63 and 90 to 126; these read EDCE…FPPP and LHQP…GLLP. The PPxY motif motif lies at 59-64; sequence YFPPPY. Over residues 95–110 the composition is skewed to polar residues; sequence PTGSQQQAWPGRQSQE. The residue at position 252 (Ser-252) is a Phosphoserine; by PKA. The interval 293–424 is H-S-H (helix-span-helix), dimerization; sequence RRKAAHVTLL…YIKEALIVID (132 aa). Positions 431-450 are disordered; that stretch reads GDQSPADSNKTLEKMEKHRK. The residue at position 434 (Ser-434) is a Phosphoserine. Residues 440-450 are compositionally biased toward basic and acidic residues; it reads KTLEKMEKHRK.

The protein belongs to the AP-2 family. As to quaternary structure, binds DNA as a dimer. Can form homodimers or heterodimers with other AP-2 family members. Interacts with WWOX. Interacts with UBE2I. Interacts with KCTD1; this interaction represses transcription activation. Interacts with CITED2 (via C-terminus); the interaction stimulates TFAP2B-transcriptional activity. Interacts with CITED4. Interacts with MTA1. Post-translationally, sumoylated on Lys-10; which inhibits transcriptional activity.

The protein localises to the nucleus. In terms of biological role, sequence-specific DNA-binding transcription factor that interacts with cellular enhancer elements to regulate transcription of selected genes, and which plays a key role in early embryonic development. AP-2 factors bind to the consensus sequence 5'-GCCNNNGGC-3' and activate genes involved in a large spectrum of important biological functions. TFAP2C plays a key role in early embryonic development by regulating both inner cell mass (ICM) and trophectoderm differentiation. At the 8-cell stage, during morula development, controls expression of cell-polarity genes. Upon trophoblast commitment, binds to late trophectoderm genes in blastocysts together with CDX2, and later to extra-embryonic ectoderm genes together with SOX2. Binds to both closed and open chromatin with other transcription factors. Involved in the MTA1-mediated epigenetic regulation of ESR1 expression in breast cancer. The protein is Transcription factor AP-2 gamma (TFAP2C) of Homo sapiens (Human).